Here is a 439-residue protein sequence, read N- to C-terminus: GlutamylGlutaminyl-tRNA synthetase (439 aa).

A 'HIGH' region motif is present at residues P6–N16. The short motif at K232–R236 is the 'KMSKS' region element. Residue K235 participates in ATP binding.

Belongs to the class-I aminoacyl-tRNA synthetase family. Glutamate--tRNA ligase type 1 subfamily. Monomer.

It is found in the cytoplasm. The catalysed reaction is tRNA(Glu) + L-glutamate + ATP = L-glutamyl-tRNA(Gln) + AMP + diphosphate. Its function is as follows. Aminoacylates tRNA(Gln) with glutamate. Does not aminoacylate tRNA(Glu). The chain is GlutamylGlutaminyl-tRNA synthetase (gltX2) from Helicobacter pylori (strain ATCC 700392 / 26695) (Campylobacter pylori).